The primary structure comprises 309 residues: Probable manganese-dependent inorganic pyrophosphatase (309 aa).

Residues H9, D13, D15, D75, H97, and D149 each coordinate Mn(2+).

The protein belongs to the PPase class C family. Requires Mn(2+) as cofactor.

Its subcellular location is the cytoplasm. The catalysed reaction is diphosphate + H2O = 2 phosphate + H(+). The chain is Probable manganese-dependent inorganic pyrophosphatase from Staphylococcus epidermidis (strain ATCC 12228 / FDA PCI 1200).